The chain runs to 1135 residues: Vinculin (1135 aa).

An N-terminal globular head region spans residues 2-835 (PVFHTRTIES…GAVAKVREAF (834 aa)). At Y100 the chain carries Phosphotyrosine. The segment at 168-208 (MTKMAKMIDERQQELTHQEHRVMLVNSMNTVKELLPVLISA) is talin-interaction. 3 repeat units span residues 259–369 (ASKD…KVEN), 370–479 (AARK…KTNR), and 480–589 (AVAN…RMQE). Residues 259–589 (ASKDTEAMKR…LKDLKARMQE (331 aa)) are 3 X 112 AA tandem repeats. Residues Y537 and Y822 each carry the phosphotyrosine modification. The linker (Pro-rich) stretch occupies residues 836–878 (QPQEPDFPPPPPDLEHLHLTDELAPPKPPLPEGEVPPPRPPPP). The segment at 837–888 (PQEPDFPPPPPDLEHLHLTDELAPPKPPLPEGEVPPPRPPPPEEKDEEFPEQ) is disordered. Pro residues predominate over residues 860-876 (PPKPPLPEGEVPPPRPP). The C-terminal tail stretch occupies residues 879–1135 (EEKDEEFPEQ…RWVRKTPWYQ (257 aa)). Facilitates phospholipid membrane insertion stretches follow at residues 1004-1047 (RLVR…KRIR) and 1121-1135 (AGFTLRWVRKTPWYQ). At Y1134 the chain carries Phosphotyrosine; by SRC-type Tyr-kinases.

It belongs to the vinculin/alpha-catenin family. Exhibits self-association properties. Interacts with APBB1IP, NRAP and TLN1. Interacts with CTNNB1 and this interaction is necessary for its localization to the cell-cell junctions and for its function in regulating cell surface expression of E-cadherin. Phosphorylated; on serines, threonines and tyrosines. Phosphorylation on Tyr-1134 in activated platelets affects head-tail interactions and cell spreading but has no effect on actin binding nor on localization to focal adhesion plaques. Post-translationally, acetylated; mainly by myristic acid but also by a small amount of palmitic acid. As to expression, isoform Metavinculin is muscle-specific.

The protein localises to the cell membrane. The protein resides in the cell junction. It is found in the adherens junction. It localises to the focal adhesion. Its subcellular location is the cytoplasm. The protein localises to the cytoskeleton. The protein resides in the sarcolemma. It is found in the cell projection. It localises to the podosome. Actin filament (F-actin)-binding protein involved in cell-matrix adhesion and cell-cell adhesion. Regulates cell-surface E-cadherin expression and potentiates mechanosensing by the E-cadherin complex. May also play important roles in cell morphology and locomotion. This is Vinculin (VCL) from Gallus gallus (Chicken).